The sequence spans 172 residues: Large ribosomal subunit protein uL10 (172 aa).

The protein belongs to the universal ribosomal protein uL10 family. In terms of assembly, part of the ribosomal stalk of the 50S ribosomal subunit. The N-terminus interacts with L11 and the large rRNA to form the base of the stalk. The C-terminus forms an elongated spine to which L12 dimers bind in a sequential fashion forming a multimeric L10(L12)X complex.

Forms part of the ribosomal stalk, playing a central role in the interaction of the ribosome with GTP-bound translation factors. The sequence is that of Large ribosomal subunit protein uL10 from Chlorobium limicola (strain DSM 245 / NBRC 103803 / 6330).